The sequence spans 272 residues: D-aminoacyl-tRNA deacylase (272 aa).

As to quaternary structure, monomer. Requires Zn(2+) as cofactor.

It carries out the reaction a D-aminoacyl-tRNA + H2O = a tRNA + a D-alpha-amino acid + H(+). The catalysed reaction is glycyl-tRNA(Ala) + H2O = tRNA(Ala) + glycine + H(+). The enzyme catalyses D-tyrosyl-tRNA(Tyr) + H2O = D-tyrosine + tRNA(Tyr). D-aminoacyl-tRNA deacylase with broad substrate specificity. By recycling D-aminoacyl-tRNA to D-amino acids and free tRNA molecules, this enzyme counteracts the toxicity associated with the formation of D-aminoacyl-tRNA entities in vivo. Catalyzes the hydrolysis of D-tyrosyl-tRNA(Tyr) and D-aspartyl-tRNA(Asp). In Pyrococcus abyssi (strain GE5 / Orsay), this protein is D-aminoacyl-tRNA deacylase.